Consider the following 320-residue polypeptide: MARNKIALIGAGQIGGTLALLAGLKDLGDVVLFDIVDGVPQGKALDIAEAAPVEGFDARYAGASDYAAIKDADVVIVTAGVPRKPGMSRDDLIGINLKVMQAVGEGIKTHAPNAFVICITNPLDAMVWALQKFSGVPTNKIVGMAGVLDSARFRHFLAEEFKVSVEDVTAFVLGGHGDDMVPLTRYSTVAGVPLTDLVKLGWTTQEKLDAMVERTRKGGGEIVNLLKTGSAFYAPAASAIAMAESYLRDKKRVLPCAAYLDGQYGVKGMFIGVPIVIGANGVERVLEVTFDDAEKAMFDKSVASVTGLIEACKGVDSNLA.

NAD(+)-binding positions include 10-15 and Asp34; that span reads GAGQIG. Positions 83 and 89 each coordinate substrate. Residues Asn96 and 119–121 each bind NAD(+); that span reads ITN. Residues Asn121 and Arg152 each contribute to the substrate site. His176 (proton acceptor) is an active-site residue.

Belongs to the LDH/MDH superfamily. MDH type 3 family.

It carries out the reaction (S)-malate + NAD(+) = oxaloacetate + NADH + H(+). Functionally, catalyzes the reversible oxidation of malate to oxaloacetate. This chain is Malate dehydrogenase, found in Methylobacterium radiotolerans (strain ATCC 27329 / DSM 1819 / JCM 2831 / NBRC 15690 / NCIMB 10815 / 0-1).